We begin with the raw amino-acid sequence, 219 residues long: Large ribosomal subunit protein uL3 (219 aa).

Residues 136–156 form a disordered region; the sequence is GASHGAHRNHRKPGSIGGCAT.

The protein belongs to the universal ribosomal protein uL3 family. Part of the 50S ribosomal subunit. Forms a cluster with proteins L14 and L19.

Its function is as follows. One of the primary rRNA binding proteins, it binds directly near the 3'-end of the 23S rRNA, where it nucleates assembly of the 50S subunit. This chain is Large ribosomal subunit protein uL3, found in Kineococcus radiotolerans (strain ATCC BAA-149 / DSM 14245 / SRS30216).